The chain runs to 564 residues: DNA ligase (564 aa).

Glu234 is a binding site for ATP. Catalysis depends on Lys236, which acts as the N6-AMP-lysine intermediate. ATP-binding residues include Arg241, Arg256, Glu288, and Phe323. Residue Glu288 coordinates a divalent metal cation. Glu383 contacts a divalent metal cation. Residues Arg399 and Lys403 each coordinate ATP.

Belongs to the ATP-dependent DNA ligase family. A divalent metal cation is required as a cofactor.

It catalyses the reaction ATP + (deoxyribonucleotide)n-3'-hydroxyl + 5'-phospho-(deoxyribonucleotide)m = (deoxyribonucleotide)n+m + AMP + diphosphate.. Its function is as follows. DNA ligase that seals nicks in double-stranded DNA during DNA replication, DNA recombination and DNA repair. It is not essential for viral replication and recombination. This chain is DNA ligase (LIG), found in Vertebrata (FPV).